Consider the following 496-residue polypeptide: Glutamyl-tRNA(Gln) amidotransferase subunit A (496 aa).

Catalysis depends on charge relay system residues Lys75 and Ser150. Ser174 acts as the Acyl-ester intermediate in catalysis.

Belongs to the amidase family. GatA subfamily. In terms of assembly, heterotrimer of A, B and C subunits.

It carries out the reaction L-glutamyl-tRNA(Gln) + L-glutamine + ATP + H2O = L-glutaminyl-tRNA(Gln) + L-glutamate + ADP + phosphate + H(+). Its function is as follows. Allows the formation of correctly charged Gln-tRNA(Gln) through the transamidation of misacylated Glu-tRNA(Gln) in organisms which lack glutaminyl-tRNA synthetase. The reaction takes place in the presence of glutamine and ATP through an activated gamma-phospho-Glu-tRNA(Gln). The chain is Glutamyl-tRNA(Gln) amidotransferase subunit A from Burkholderia pseudomallei (strain 1106a).